Here is a 372-residue protein sequence, read N- to C-terminus: AA9 family lytic polysaccharide monooxygenase C (372 aa).

The signal sequence occupies residues 1–16 (MFRSALFLLLAPLALS). Cu(2+) is bound by residues H17 and H99. C59 and C189 are oxidised to a cystine. O2-binding residues include H174 and Q184. Position 186 (Y186) interacts with Cu(2+).

Belongs to the polysaccharide monooxygenase AA9 family. Requires Cu(2+) as cofactor.

The protein resides in the secreted. The catalysed reaction is [(1-&gt;4)-beta-D-glucosyl]n+m + reduced acceptor + O2 = 4-dehydro-beta-D-glucosyl-[(1-&gt;4)-beta-D-glucosyl]n-1 + [(1-&gt;4)-beta-D-glucosyl]m + acceptor + H2O.. Lytic polysaccharide monooxygenase (LPMO) that depolymerizes crystalline and amorphous polysaccharides via the oxidation of scissile alpha- or beta-(1-4)-glycosidic bonds, yielding C1 or C4 oxidation products. Catalysis by LPMOs requires the reduction of the active-site copper from Cu(II) to Cu(I) by a reducing agent and H(2)O(2) or O(2) as a cosubstrate. The protein is AA9 family lytic polysaccharide monooxygenase C of Aspergillus tamarii.